Here is a 213-residue protein sequence, read N- to C-terminus: Cytidylate kinase (213 aa).

7–15 (GPAASGKGT) serves as a coordination point for ATP.

Belongs to the cytidylate kinase family. Type 1 subfamily.

The protein localises to the cytoplasm. The enzyme catalyses CMP + ATP = CDP + ADP. It carries out the reaction dCMP + ATP = dCDP + ADP. The protein is Cytidylate kinase of Rhodospirillum rubrum (strain ATCC 11170 / ATH 1.1.1 / DSM 467 / LMG 4362 / NCIMB 8255 / S1).